We begin with the raw amino-acid sequence, 159 residues long: Ribosomal RNA large subunit methyltransferase H (159 aa).

Residues Gly108 and 127–132 each bind S-adenosyl-L-methionine; that span reads FGPMTF.

It belongs to the RNA methyltransferase RlmH family. Homodimer.

Its subcellular location is the cytoplasm. It catalyses the reaction pseudouridine(1915) in 23S rRNA + S-adenosyl-L-methionine = N(3)-methylpseudouridine(1915) in 23S rRNA + S-adenosyl-L-homocysteine + H(+). Functionally, specifically methylates the pseudouridine at position 1915 (m3Psi1915) in 23S rRNA. This Magnetococcus marinus (strain ATCC BAA-1437 / JCM 17883 / MC-1) protein is Ribosomal RNA large subunit methyltransferase H.